The chain runs to 346 residues: Glycerol-1-phosphate dehydrogenase [NAD(P)+] (346 aa).

NAD(+)-binding positions include 93-97 and 115-118; these read GSIID and TTAS. Asp-120 lines the substrate pocket. An NAD(+)-binding site is contributed by Ser-124. Asp-167 contributes to the substrate binding site. Zn(2+) is bound by residues Asp-167 and His-247. A substrate-binding site is contributed by His-251. A Zn(2+)-binding site is contributed by His-263.

It belongs to the glycerol-1-phosphate dehydrogenase family. Zn(2+) serves as cofactor.

The protein resides in the cytoplasm. It carries out the reaction sn-glycerol 1-phosphate + NAD(+) = dihydroxyacetone phosphate + NADH + H(+). It catalyses the reaction sn-glycerol 1-phosphate + NADP(+) = dihydroxyacetone phosphate + NADPH + H(+). The protein operates within membrane lipid metabolism; glycerophospholipid metabolism. In terms of biological role, catalyzes the NAD(P)H-dependent reduction of dihydroxyacetonephosphate (DHAP or glycerone phosphate) to glycerol 1-phosphate (G1P). The G1P thus generated is used as the glycerophosphate backbone of phospholipids in the cellular membranes of Archaea. This Pyrococcus abyssi (strain GE5 / Orsay) protein is Glycerol-1-phosphate dehydrogenase [NAD(P)+].